The following is an 841-amino-acid chain: DNA ligase (841 aa).

NAD(+) contacts are provided by residues 33-37 (DAQYD), 82-83 (SL), and Glu114. The active-site N6-AMP-lysine intermediate is the Lys116. Positions 137, 174, 300, and 324 each coordinate NAD(+). Zn(2+)-binding residues include Cys418, Cys421, Cys436, and Cys442. The BRCT domain maps to 758–841 (EKTGPLDGQT…AFLGEHGQQR (84 aa)).

The protein belongs to the NAD-dependent DNA ligase family. LigA subfamily. The cofactor is Mg(2+). Requires Mn(2+) as cofactor.

The enzyme catalyses NAD(+) + (deoxyribonucleotide)n-3'-hydroxyl + 5'-phospho-(deoxyribonucleotide)m = (deoxyribonucleotide)n+m + AMP + beta-nicotinamide D-nucleotide.. Functionally, DNA ligase that catalyzes the formation of phosphodiester linkages between 5'-phosphoryl and 3'-hydroxyl groups in double-stranded DNA using NAD as a coenzyme and as the energy source for the reaction. It is essential for DNA replication and repair of damaged DNA. This is DNA ligase from Xanthomonas oryzae pv. oryzae (strain KACC10331 / KXO85).